The primary structure comprises 245 residues: 5-oxoprolinase subunit A (245 aa).

Belongs to the LamB/PxpA family. Forms a complex composed of PxpA, PxpB and PxpC.

It carries out the reaction 5-oxo-L-proline + ATP + 2 H2O = L-glutamate + ADP + phosphate + H(+). Its function is as follows. Catalyzes the cleavage of 5-oxoproline to form L-glutamate coupled to the hydrolysis of ATP to ADP and inorganic phosphate. The protein is 5-oxoprolinase subunit A of Chromobacterium violaceum (strain ATCC 12472 / DSM 30191 / JCM 1249 / CCUG 213 / NBRC 12614 / NCIMB 9131 / NCTC 9757 / MK).